A 335-amino-acid chain; its full sequence is UDP-3-O-acylglucosamine N-acyltransferase (335 aa).

H225 functions as the Proton acceptor in the catalytic mechanism.

The protein belongs to the transferase hexapeptide repeat family. LpxD subfamily. Homotrimer.

It catalyses the reaction a UDP-3-O-[(3R)-3-hydroxyacyl]-alpha-D-glucosamine + a (3R)-hydroxyacyl-[ACP] = a UDP-2-N,3-O-bis[(3R)-3-hydroxyacyl]-alpha-D-glucosamine + holo-[ACP] + H(+). It participates in bacterial outer membrane biogenesis; LPS lipid A biosynthesis. Catalyzes the N-acylation of UDP-3-O-acylglucosamine using 3-hydroxyacyl-ACP as the acyl donor. Is involved in the biosynthesis of lipid A, a phosphorylated glycolipid that anchors the lipopolysaccharide to the outer membrane of the cell. This chain is UDP-3-O-acylglucosamine N-acyltransferase, found in Delftia acidovorans (strain DSM 14801 / SPH-1).